The chain runs to 283 residues: Thymidylate synthase (283 aa).

Residue Arg22 coordinates dUMP. The active-site Nucleophile is Cys160. Residues 180–183 (RSCD), Asn191, and 221–223 (HIY) each bind dUMP. Asp183 contributes to the (6R)-5,10-methylene-5,6,7,8-tetrahydrofolate binding site. Position 282 (Ser282) interacts with (6R)-5,10-methylene-5,6,7,8-tetrahydrofolate.

This sequence belongs to the thymidylate synthase family. Bacterial-type ThyA subfamily. In terms of assembly, homodimer.

It is found in the cytoplasm. The catalysed reaction is dUMP + (6R)-5,10-methylene-5,6,7,8-tetrahydrofolate = 7,8-dihydrofolate + dTMP. Its pathway is pyrimidine metabolism; dTTP biosynthesis. Catalyzes the reductive methylation of 2'-deoxyuridine-5'-monophosphate (dUMP) to 2'-deoxythymidine-5'-monophosphate (dTMP) while utilizing 5,10-methylenetetrahydrofolate (mTHF) as the methyl donor and reductant in the reaction, yielding dihydrofolate (DHF) as a by-product. This enzymatic reaction provides an intracellular de novo source of dTMP, an essential precursor for DNA biosynthesis. This Shewanella halifaxensis (strain HAW-EB4) protein is Thymidylate synthase.